Consider the following 175-residue polypeptide: DDB1- and CUL4-associated factor 16 (175 aa).

The segment at 1–42 (MGPRNPSPDPLSESESEEEENTNYLNESSGEEWDSSEEEDPV) is disordered. Composition is skewed to acidic residues over residues 12-21 (SESESEEEEN) and 29-41 (SGEE…EEDP). K61 carries the post-translational modification N6-acetyllysine.

Interacts with DDB1 and CUL4A.

The protein resides in the nucleus. It functions in the pathway protein modification; protein ubiquitination. In terms of biological role, functions as a substrate recognition component for CUL4-DDB1 E3 ubiquitin-protein ligase complex, which mediates ubiquitination and proteasome-dependent degradation of nuclear proteins. In Bos taurus (Bovine), this protein is DDB1- and CUL4-associated factor 16 (DCAF16).